A 458-amino-acid polypeptide reads, in one-letter code: Tol-Pal system protein TolB (458 aa).

Residues 1–23 (MSSVIRKWALTALMAVSSTALFA) form the signal peptide.

It belongs to the TolB family. As to quaternary structure, the Tol-Pal system is composed of five core proteins: the inner membrane proteins TolA, TolQ and TolR, the periplasmic protein TolB and the outer membrane protein Pal. They form a network linking the inner and outer membranes and the peptidoglycan layer.

The protein localises to the periplasm. Its function is as follows. Part of the Tol-Pal system, which plays a role in outer membrane invagination during cell division and is important for maintaining outer membrane integrity. This is Tol-Pal system protein TolB from Zymomonas mobilis subsp. mobilis (strain ATCC 31821 / ZM4 / CP4).